A 437-amino-acid polypeptide reads, in one-letter code: Serine hydroxymethyltransferase (437 aa).

Residues L130 and 134 to 136 contribute to the (6S)-5,6,7,8-tetrahydrofolate site; that span reads GHL. N6-(pyridoxal phosphate)lysine is present on K239. Residue 363 to 365 coordinates (6S)-5,6,7,8-tetrahydrofolate; it reads TPF.

The protein belongs to the SHMT family. In terms of assembly, homodimer. It depends on pyridoxal 5'-phosphate as a cofactor.

Its subcellular location is the cytoplasm. The enzyme catalyses (6R)-5,10-methylene-5,6,7,8-tetrahydrofolate + glycine + H2O = (6S)-5,6,7,8-tetrahydrofolate + L-serine. The protein operates within one-carbon metabolism; tetrahydrofolate interconversion. It functions in the pathway amino-acid biosynthesis; glycine biosynthesis; glycine from L-serine: step 1/1. In terms of biological role, catalyzes the reversible interconversion of serine and glycine with tetrahydrofolate (THF) serving as the one-carbon carrier. This reaction serves as the major source of one-carbon groups required for the biosynthesis of purines, thymidylate, methionine, and other important biomolecules. Also exhibits THF-independent aldolase activity toward beta-hydroxyamino acids, producing glycine and aldehydes, via a retro-aldol mechanism. The protein is Serine hydroxymethyltransferase of Bartonella henselae (strain ATCC 49882 / DSM 28221 / CCUG 30454 / Houston 1) (Rochalimaea henselae).